The sequence spans 180 residues: Nucleoside triphosphate/diphosphate phosphatase (180 aa).

Catalysis depends on R26, which acts as the Proton donor. The Mg(2+) site is built by N90, D106, D108, D110, D123, and E126.

Belongs to the Ntdp family. It depends on Mg(2+) as a cofactor.

It catalyses the reaction a ribonucleoside 5'-triphosphate + H2O = a ribonucleoside 5'-diphosphate + phosphate + H(+). The enzyme catalyses a ribonucleoside 5'-diphosphate + H2O = a ribonucleoside 5'-phosphate + phosphate + H(+). In terms of biological role, has nucleoside phosphatase activity towards nucleoside triphosphates and nucleoside diphosphates. The protein is Nucleoside triphosphate/diphosphate phosphatase of Staphylococcus aureus (strain MSSA476).